The primary structure comprises 163 residues: uncharacterized protein (163 aa).

4Fe-4S ferredoxin-type domains lie at 30-59, 61-90, 105-136, and 136-163; these read REII…YSSD, LYIT…IIRL, KYEF…EYGS, and SKIR…IILR. [4Fe-4S] cluster-binding residues include cysteine 39, cysteine 42, cysteine 45, cysteine 49, cysteine 70, cysteine 73, cysteine 76, cysteine 80, cysteine 116, cysteine 119, cysteine 122, cysteine 126, cysteine 145, cysteine 148, cysteine 151, and cysteine 155.

This is an uncharacterized protein from Methanocaldococcus jannaschii (strain ATCC 43067 / DSM 2661 / JAL-1 / JCM 10045 / NBRC 100440) (Methanococcus jannaschii).